The primary structure comprises 76 residues: Sec-independent protein translocase protein TatA (76 aa).

A helical membrane pass occupies residues 1–21 (MGSFSIWHWLIVLVIVALVFG). Composition is skewed to basic and acidic residues over residues 39–50 (FKDGMKGEDDKP) and 64–76 (GTVD…KSNS). The tract at residues 39–76 (FKDGMKGEDDKPAAQNAAPSQVADKGTVDVEVKEKSNS) is disordered.

It belongs to the TatA/E family. In terms of assembly, the Tat system comprises two distinct complexes: a TatABC complex, containing multiple copies of TatA, TatB and TatC subunits, and a separate TatA complex, containing only TatA subunits. Substrates initially bind to the TatABC complex, which probably triggers association of the separate TatA complex to form the active translocon.

The protein localises to the cell inner membrane. Its function is as follows. Part of the twin-arginine translocation (Tat) system that transports large folded proteins containing a characteristic twin-arginine motif in their signal peptide across membranes. TatA could form the protein-conducting channel of the Tat system. The polypeptide is Sec-independent protein translocase protein TatA (Herminiimonas arsenicoxydans).